The sequence spans 126 residues: Aspartate 1-decarboxylase (126 aa).

The active-site Schiff-base intermediate with substrate; via pyruvic acid is Ser-25. At Ser-25 the chain carries Pyruvic acid (Ser). Thr-57 provides a ligand contact to substrate. The active-site Proton donor is the Tyr-58. 73 to 75 contacts substrate; that stretch reads GAA.

The protein belongs to the PanD family. In terms of assembly, heterooctamer of four alpha and four beta subunits. Requires pyruvate as cofactor. Is synthesized initially as an inactive proenzyme, which is activated by self-cleavage at a specific serine bond to produce a beta-subunit with a hydroxyl group at its C-terminus and an alpha-subunit with a pyruvoyl group at its N-terminus.

It localises to the cytoplasm. The catalysed reaction is L-aspartate + H(+) = beta-alanine + CO2. It functions in the pathway cofactor biosynthesis; (R)-pantothenate biosynthesis; beta-alanine from L-aspartate: step 1/1. Its function is as follows. Catalyzes the pyruvoyl-dependent decarboxylation of aspartate to produce beta-alanine. This Thioalkalivibrio sulfidiphilus (strain HL-EbGR7) protein is Aspartate 1-decarboxylase.